Here is a 310-residue protein sequence, read N- to C-terminus: uncharacterized protein (310 aa).

This sequence belongs to the YiaX1 family.

This is an uncharacterized protein from Salmonella typhimurium (strain LT2 / SGSC1412 / ATCC 700720).